Here is a 99-residue protein sequence, read N- to C-terminus: Protein adenylyltransferase MntA (99 aa).

Positions 33-47 match the GSX(10)DXD motif motif; sequence GSYVRGEAKEDSDVD. Catalysis depends on residues Asp-45 and Asp-47. 3 residues coordinate Mg(2+): Asp-45, Asp-47, and Asp-77.

The protein belongs to the MntA antitoxin family. The cofactor is Mg(2+).

It catalyses the reaction L-tyrosyl-[protein] + ATP = O-(5'-adenylyl)-L-tyrosyl-[protein] + diphosphate. It carries out the reaction O-(5'-adenylyl)-L-tyrosyl-[protein] + ATP = O-[5'-(adenylyl-(5'-&gt;3')-adenylyl)]-L-tyrosyl-[protein] + diphosphate. In terms of biological role, antitoxin component of a type VII toxin-antitoxin (TA) system. Overexpression in E.coli neutralizes the toxic effect of cognate toxin HepT. Neutralization is mostly due to AMPylation of the toxin by this enzyme. In Thermococcus cleftensis (strain DSM 27260 / KACC 17922 / CL1), this protein is Protein adenylyltransferase MntA.